Here is a 361-residue protein sequence, read N- to C-terminus: Phospho-N-acetylmuramoyl-pentapeptide-transferase (361 aa).

Helical transmembrane passes span 25 to 45, 73 to 93, 97 to 117, 132 to 152, 167 to 187, 200 to 220, 240 to 260, 264 to 284, 289 to 309, and 338 to 358; these read RAVMAALTALTISLLLGPWVI, TMGGSLILLAITLTTLLWADL, YVWLLLAVMLGTGALGFYDDW, FKMAWQSAIAIGAGVFLIATA, TVAYPLGAVGFCVLTYFVIVG, GLAALPTVLVSAGLAIFAYVA, VVVFCAAMCGACLGFLWFNAY, VFMGDVGALALGAALGTVAVI, IVLFLMGGLFVMEALSVMIQV, and QVVVRFWIVTMMLVLIGLSTL.

This sequence belongs to the glycosyltransferase 4 family. MraY subfamily. Mg(2+) is required as a cofactor.

Its subcellular location is the cell inner membrane. It carries out the reaction UDP-N-acetyl-alpha-D-muramoyl-L-alanyl-gamma-D-glutamyl-meso-2,6-diaminopimeloyl-D-alanyl-D-alanine + di-trans,octa-cis-undecaprenyl phosphate = di-trans,octa-cis-undecaprenyl diphospho-N-acetyl-alpha-D-muramoyl-L-alanyl-D-glutamyl-meso-2,6-diaminopimeloyl-D-alanyl-D-alanine + UMP. The protein operates within cell wall biogenesis; peptidoglycan biosynthesis. In terms of biological role, catalyzes the initial step of the lipid cycle reactions in the biosynthesis of the cell wall peptidoglycan: transfers peptidoglycan precursor phospho-MurNAc-pentapeptide from UDP-MurNAc-pentapeptide onto the lipid carrier undecaprenyl phosphate, yielding undecaprenyl-pyrophosphoryl-MurNAc-pentapeptide, known as lipid I. The sequence is that of Phospho-N-acetylmuramoyl-pentapeptide-transferase from Chromobacterium violaceum (strain ATCC 12472 / DSM 30191 / JCM 1249 / CCUG 213 / NBRC 12614 / NCIMB 9131 / NCTC 9757 / MK).